The sequence spans 112 residues: Transcriptional regulator WhiD (112 aa).

The 4Fe-4S Wbl-type domain maps to 22-86 (ACRGVDSSLF…GGLTEDEREE (65 aa)). [4Fe-4S] cluster is bound by residues C23, C53, C56, and C62.

This sequence belongs to the WhiB family. The 4Fe-4S form is a monomer; upon oxidation forms a disulfide-bonded homodimer. It depends on [4Fe-4S] cluster as a cofactor. Can be nitrosylated by NO, 8 NO react per cluster. These complexes are quite stable under anaerobic conditions, but degrade slowly aerobically. Post-translationally, upon Fe-S cluster removal intramolecular disulfide bonds are formed.

The protein localises to the cytoplasm. In terms of biological role, acts as a transcriptional regulator. Probably redox-responsive. The apo- but not holo-form probably binds DNA. Plays a positive role in prespore maturation and the initiation of sporulation septation. The sequence is that of Transcriptional regulator WhiD (whiD) from Streptomyces coelicolor (strain ATCC BAA-471 / A3(2) / M145).